The chain runs to 560 residues: Phosphoglucomutase 1 (560 aa).

Residues Arg24 and Ser116 each contribute to the alpha-D-glucose 1,6-bisphosphate site. Catalysis depends on Ser116, which acts as the Phosphoserine intermediate. Ser116, Asp288, Asp290, and Asp292 together coordinate Mg(2+). Ser116 bears the Phosphoserine mark. Asp292, Arg293, Thr357, Glu376, Ser378, and Lys389 together coordinate alpha-D-glucose 1,6-bisphosphate.

The protein belongs to the phosphohexose mutase family. In terms of assembly, monomer. The cofactor is Mg(2+). As to expression, localized primarily to fat bodies in third instar larvae.

It catalyses the reaction alpha-D-glucose 1-phosphate = alpha-D-glucose 6-phosphate. It carries out the reaction O-phospho-L-seryl-[protein] + alpha-D-glucose 1-phosphate = alpha-D-glucose 1,6-bisphosphate + L-seryl-[protein]. The catalysed reaction is alpha-D-glucose 1,6-bisphosphate + L-seryl-[protein] = O-phospho-L-seryl-[protein] + alpha-D-glucose 6-phosphate. Its function is as follows. Catalyzes the reversible isomerization of alpha-D-glucose 1-phosphate to alpha-D-glucose 6-phosphate. The mechanism proceeds via the intermediate compound alpha-D-glucose 1,6-bisphosphate. This enzyme participates in both the breakdown and synthesis of glucose. Enzyme of the glycolytic pathway. Glycolysis is essential in glial cells but not in neurons; neurons rely on the citric acid cycle for their energy needs, and on lactate and alanine secreted into the hemolymph by glial cells to fuel it. This chain is Phosphoglucomutase 1, found in Drosophila melanogaster (Fruit fly).